The primary structure comprises 244 residues: Claudin-12 (244 aa).

Residues 1–10 lie on the Cytoplasmic side of the membrane; that stretch reads MGCRDVHAAT. The chain crosses the membrane as a helical span at residues 11-31; that stretch reads VLSFLCGIASVAGLFAGTLLP. The Extracellular portion of the chain corresponds to 32-87; that stretch reads NWRKLRLITFNRNEKNLTVYTGLWVKCARYDGGNDCLMYDAAWYSSVDQLDLRVLQ. The helical transmembrane segment at 88–108 threads the bilayer; sequence FALPLSILIAMGALLLCLIGM. Residues 109 to 135 are Cytoplasmic-facing; that stretch reads CNTAFRSSVPNIKLAKCLVNSAGCHLV. The helical transmembrane segment at 136 to 156 threads the bilayer; the sequence is AGLLFFLAGTVSLSPSIWVIF. Topologically, residues 157–174 are extracellular; the sequence is YNIHLNRKFEPVFAFDYA. The helical transmembrane segment at 175–195 threads the bilayer; it reads VYVTVASAGGLFMTALLLFIW. Residues 196–244 are Cytoplasmic-facing; sequence YCACKSLPSPFWQPLYSHPPGMHTYSQPYSARSRLSAIEIDIPVVSHTT. Residues Ser228 and Ser231 each carry the phosphoserine modification.

Belongs to the claudin family. In terms of assembly, interacts with OCLN.

The protein resides in the cell junction. The protein localises to the tight junction. Its subcellular location is the cell membrane. In terms of biological role, plays a major role in tight junction-specific obliteration of the intercellular space, through calcium-independent cell-adhesion activity. The sequence is that of Claudin-12 (CLDN12) from Bos taurus (Bovine).